The sequence spans 762 residues: MEFEQEYTAEEALNIEKEFTRLKGKHYMDHAGTTLYAESQIRAVHDMLAQNLFCNPHSSPLTGKLLQQVRHRLLRFFNTSPSDYSLVFTSGATASLKLVAESFRFRPPDEPESSPDEGAFVYLRDNHTSVLGMRSVVGTERIDPLEPEELLRHLKVSARCSGGTKPSLLVFPAQNNFNAAKYPLDLVEEIQQNGLSGYDDERFYVCLDAASYVSTNFLDLGRYRPDFVCMSFYKIFGYPTGLGALLIRNGSEDVLDKKYYGGGTIKIMLSGQNLHLKHDDLVTRFEDGTQPFLSIISLLEGMNTIQRLIPAANGYRPMERISKHVFSLAKYCYRKLGTLQHANGKKAILFYSDTRYETRDRQGGIVTFNVLKDDGSHLGFSEFAKFAGQHQIYVRTGCFCNAGSCQKHLGLTDEDILMFYEMGKVCGDDTDMIEGRPTGTVRVSFGYMNKKEDVNRLVDMINDCFVSKAVSNVAMVSPIRNVIKNEGIALKAIYLYPIRSCGGYRITAAWPLTERGLKYDREFTIVDSNGNPLMRNKHAEMSTIHPKIDPSLNFLILTHPFMEDLILKIRKLPTEFNDGESIDLGDAAAAWISKALRMPKLRLLRTSATDRKPPHKLLMINWDAMKTLSDDEGVESDATMSWLVDHFRGSLIVEGKAEEDLQGWKEVKIGKKRFKVQANCSRCPMIHVDQSGEAIPADSLKAIANVFTKKIPLGVHLTAVDEGFPEGVLECGSILEPVRQSDSPKAHIIKDSVSTRYNFLVK.

K234 bears the N6-(pyridoxal phosphate)lysine mark. C400 is an active-site residue. In terms of domain architecture, MOSC spans A590–V738.

This sequence belongs to the class-V pyridoxal-phosphate-dependent aminotransferase family. MOCOS subfamily. Pyridoxal 5'-phosphate is required as a cofactor.

It catalyses the reaction Mo-molybdopterin + L-cysteine + AH2 = thio-Mo-molybdopterin + L-alanine + A + H2O. Functionally, sulfurates the molybdenum cofactor. Sulfation of molybdenum is essential for xanthine dehydrogenase (XDH) and aldehyde oxidase (ADO) enzymes in which molybdenum cofactor is liganded by 1 oxygen and 1 sulfur atom in active form. This Aedes aegypti (Yellowfever mosquito) protein is Molybdenum cofactor sulfurase 2.